We begin with the raw amino-acid sequence, 214 residues long: Ras-related protein RABH1c (214 aa).

16–23 (GDQSVGKT) serves as a coordination point for GTP. The Effector region signature appears at 38–46 (YQPTIGIDF). GTP-binding positions include 64–68 (DTAGQ), 123–126 (NKTD), and 153–154 (SA). The tract at residues 194-214 (TSNSSQGEQQGGAGGGGGCSC) is disordered. Gly residues predominate over residues 202-214 (QQGGAGGGGGCSC). 2 S-geranylgeranyl cysteine lipidation sites follow: C212 and C214. C214 is subject to Cysteine methyl ester.

This sequence belongs to the small GTPase superfamily. Rab family. Interacts with the C-terminus of GC5, but not with GC3.

The protein resides in the golgi apparatus membrane. Its subcellular location is the cytoplasm. The protein localises to the cytosol. Protein transport. Regulator of membrane traffic from the Golgi apparatus towards the endoplasmic reticulum (ER). The polypeptide is Ras-related protein RABH1c (RABH1C) (Arabidopsis thaliana (Mouse-ear cress)).